Here is a 429-residue protein sequence, read N- to C-terminus: Adenylosuccinate synthetase (429 aa).

Residues 12 to 18 (GDEGKGK) and 40 to 42 (GHT) each bind GTP. Catalysis depends on aspartate 13, which acts as the Proton acceptor. Residues aspartate 13 and glycine 40 each coordinate Mg(2+). IMP contacts are provided by residues 13 to 16 (DEGK), 38 to 41 (NAGH), threonine 129, arginine 143, glutamine 224, threonine 239, and arginine 303. The active-site Proton donor is histidine 41. Substrate is bound at residue 299–305 (VTTGRAR). Residues arginine 305, 331 to 333 (KLD), and 413 to 415 (GVG) each bind GTP.

Belongs to the adenylosuccinate synthetase family. In terms of assembly, homodimer. Mg(2+) is required as a cofactor.

The protein resides in the cytoplasm. It carries out the reaction IMP + L-aspartate + GTP = N(6)-(1,2-dicarboxyethyl)-AMP + GDP + phosphate + 2 H(+). It functions in the pathway purine metabolism; AMP biosynthesis via de novo pathway; AMP from IMP: step 1/2. In terms of biological role, plays an important role in the de novo pathway of purine nucleotide biosynthesis. Catalyzes the first committed step in the biosynthesis of AMP from IMP. The protein is Adenylosuccinate synthetase of Rhodococcus opacus (strain B4).